Consider the following 152-residue polypeptide: Protein Smg homolog (152 aa).

It belongs to the Smg family.

This chain is Protein Smg homolog, found in Bordetella avium (strain 197N).